The following is a 101-amino-acid chain: DNA-binding protein Fis (101 aa).

Positions 77–96 form a DNA-binding region, H-T-H motif; the sequence is QTRAANMLGINRGTLRKKLK.

This sequence belongs to the transcriptional regulatory Fis family. In terms of assembly, homodimer.

Its function is as follows. Activates ribosomal RNA transcription. Plays a direct role in upstream activation of rRNA promoters. This chain is DNA-binding protein Fis, found in Shewanella baltica (strain OS223).